Here is a 505-residue protein sequence, read N- to C-terminus: Lysine--tRNA ligase 1 (505 aa).

Mg(2+) contacts are provided by D415 and E422.

It belongs to the class-II aminoacyl-tRNA synthetase family. Homodimer. Requires Mg(2+) as cofactor.

It is found in the cytoplasm. It catalyses the reaction tRNA(Lys) + L-lysine + ATP = L-lysyl-tRNA(Lys) + AMP + diphosphate. The sequence is that of Lysine--tRNA ligase 1 (lysS1) from Mycobacterium bovis (strain ATCC BAA-935 / AF2122/97).